A 176-amino-acid polypeptide reads, in one-letter code: Translation initiation factor IF-3 (176 aa).

Belongs to the IF-3 family. As to quaternary structure, monomer.

Its subcellular location is the cytoplasm. Functionally, IF-3 binds to the 30S ribosomal subunit and shifts the equilibrium between 70S ribosomes and their 50S and 30S subunits in favor of the free subunits, thus enhancing the availability of 30S subunits on which protein synthesis initiation begins. This chain is Translation initiation factor IF-3, found in Nitratidesulfovibrio vulgaris (strain DSM 19637 / Miyazaki F) (Desulfovibrio vulgaris).